Reading from the N-terminus, the 864-residue chain is Leukocyte tyrosine kinase receptor (864 aa).

Positions 1–16 (MGCWGQLLVWFGAAGA) are cleaved as a signal peptide. Residues 17–424 (ILCSSPGSQE…CMDLHKPPGP (408 aa)) lie on the Extracellular side of the membrane. Over residues 30 to 40 (RSSPLPLASPS) the composition is skewed to low complexity. The tract at residues 30 to 64 (RSSPLPLASPSPRDPKVSAPPSILEPASPLNSPGT) is disordered. Intrachain disulfides connect Cys73/Cys86 and Cys168/Cys179. A disordered region spans residues 239–297 (YLRPRDRGRTQASPEKLENRSEAPGSGGRGGAAGGGGGWTSRAPSPQAGRSLQEGAEGG). A compositionally biased stretch (basic and acidic residues) spans 241 to 259 (RPRDRGRTQASPEKLENRS). The N-linked (GlcNAc...) asparagine glycan is linked to Asn257. Residues 263-277 (GSGGRGGAAGGGGGW) show a composition bias toward gly residues. Residues Cys300 and Cys322 are joined by a disulfide bond. N-linked (GlcNAc...) asparagine glycans are attached at residues Asn380 and Asn412. A helical membrane pass occupies residues 425 to 449 (LVLMVAVVATSTLSLLMVCGVLILV). The Cytoplasmic segment spans residues 450–864 (KQKKWQGLQE…QNLWNPTYRS (415 aa)). One can recognise a Protein kinase domain in the interval 510–786 (VTLLRALGHG…LQYCTQDPDV (277 aa)). ATP is bound by residues 516–524 (LGHGAFGEV) and Lys544. Asp643 (proton acceptor) is an active-site residue. Tyr676 is subject to Phosphotyrosine; by autocatalysis. 2 disordered regions span residues 790-830 (LLPM…KLKS) and 842-864 (SGLK…TYRS). Positions 852-864 (LQPQNLWNPTYRS) are enriched in polar residues.

Belongs to the protein kinase superfamily. Tyr protein kinase family. Insulin receptor subfamily. As to quaternary structure, homodimer; homodimerizes following ligand-binding. Part of a complex including LTK, TNK2 and GRB2, in which GRB2 promotes LTK recruitment by TNK2. Post-translationally, phosphorylated at tyrosine residues by autocatalysis, which activates kinase activity. Expressed in non-hematopoietic cell lines and T- and B-cell lines.

The protein resides in the cell membrane. It carries out the reaction L-tyrosyl-[protein] + ATP = O-phospho-L-tyrosyl-[protein] + ADP + H(+). With respect to regulation, activated by ligand-binding, leading to homodimerization and autophosphorylation. In terms of biological role, receptor with a tyrosine-protein kinase activity. Following activation by ALKAL1 or ALKAL2 ligands at the cell surface, transduces an extracellular signal into an intracellular response. Ligand-binding to the extracellular domain induces tyrosine kinase activation, leading to activation of the mitogen-activated protein kinase (MAPK) pathway. Phosphorylates almost exclusively at the first tyrosine of the Y-x-x-x-Y-Y motif. The exact function of this protein is not known; studies with chimeric proteins demonstrate its ability to promote growth and specifically neurite outgrowth, and cell survival. Involved in regulation of the secretory pathway involving endoplasmic reticulum (ER) export sites (ERESs) and ER to Golgi transport. This Homo sapiens (Human) protein is Leukocyte tyrosine kinase receptor.